Consider the following 41-residue polypeptide: Large ribosomal subunit protein bL36 (41 aa).

Belongs to the bacterial ribosomal protein bL36 family.

This Pelagibacter ubique (strain HTCC1062) protein is Large ribosomal subunit protein bL36.